The sequence spans 456 residues: Ribulose bisphosphate carboxylase large chain (456 aa).

Lys7 is subject to N6,N6,N6-trimethyllysine. 2 residues coordinate substrate: Asn116 and Thr166. Lys168 serves as the catalytic Proton acceptor. Lys170 serves as a coordination point for substrate. Positions 194, 196, and 197 each coordinate Mg(2+). Residue Lys194 is modified to N6-carboxylysine. His287 serves as the catalytic Proton acceptor. 3 residues coordinate substrate: Arg288, His320, and Ser372.

The protein belongs to the RuBisCO large chain family. Type I subfamily. Heterohexadecamer of 8 large chains and 8 small chains; disulfide-linked. The disulfide link is formed within the large subunit homodimers. It depends on Mg(2+) as a cofactor. In terms of processing, the disulfide bond which can form in the large chain dimeric partners within the hexadecamer appears to be associated with oxidative stress and protein turnover.

It localises to the plastid. Its subcellular location is the chloroplast. It catalyses the reaction 2 (2R)-3-phosphoglycerate + 2 H(+) = D-ribulose 1,5-bisphosphate + CO2 + H2O. It carries out the reaction D-ribulose 1,5-bisphosphate + O2 = 2-phosphoglycolate + (2R)-3-phosphoglycerate + 2 H(+). RuBisCO catalyzes two reactions: the carboxylation of D-ribulose 1,5-bisphosphate, the primary event in carbon dioxide fixation, as well as the oxidative fragmentation of the pentose substrate in the photorespiration process. Both reactions occur simultaneously and in competition at the same active site. The chain is Ribulose bisphosphate carboxylase large chain from Barnardia japonica (Chinese squill).